The sequence spans 35 residues: Cytochrome b6-f complex subunit 5 (35 aa).

The helical transmembrane segment at 5–25 (LLTGIVLGSIFITLLGLLAAA) threads the bilayer.

The protein belongs to the PetG family. In terms of assembly, the 4 large subunits of the cytochrome b6-f complex are cytochrome b6, subunit IV (17 kDa polypeptide, PetD), cytochrome f and the Rieske protein, while the 4 small subunits are PetG, PetL, PetM and PetN. The complex functions as a dimer.

Its subcellular location is the plastid. It is found in the chloroplast thylakoid membrane. Component of the cytochrome b6-f complex, which mediates electron transfer between photosystem II (PSII) and photosystem I (PSI), cyclic electron flow around PSI, and state transitions. PetG is required for either the stability or assembly of the cytochrome b6-f complex. The sequence is that of Cytochrome b6-f complex subunit 5 from Cyanidium caldarium (Red alga).